Reading from the N-terminus, the 217-residue chain is Small ribosomal subunit protein uS3 (217 aa).

In terms of domain architecture, KH type-2 spans 29–97 (ADYLHEDLAI…AQLNKLTGKQ (69 aa)).

The protein belongs to the universal ribosomal protein uS3 family. Part of the 30S ribosomal subunit. Forms a tight complex with proteins S10 and S14.

In terms of biological role, binds the lower part of the 30S subunit head. Binds mRNA in the 70S ribosome, positioning it for translation. The protein is Small ribosomal subunit protein uS3 of Streptococcus mutans serotype c (strain ATCC 700610 / UA159).